An 833-amino-acid polypeptide reads, in one-letter code: MTASPDPAQRIDALRQRIEDANYRYHVLDEPQIADVEYDRLLRELEALEAAHPELATADSPTQRVGYLAASRFAEVRHVLPMLSLGNAFSDEEVAEFVRRISERLERKQPVFCAEPKLDGLAISLRYEQGEFVQGATRGDGATGEDVSANLRTVKAIPLRLRGTGWPEVLEVRGEVYMPRAAFEAYNAQMRLQGGKVLANPRNGAAGSLRQLDARITAQRPLSFFAYGVGEVADGALPPTHSTMLAQLREWGFPVSQLVEVVQGSEGLLTYYRRIGEARDGLPFDIDGVVYKLDDLAGQREMGFVSRAPRWALAHKFPAQEQSTTVEAIEIQIGRTGAATPVARLKPVHVAGVVVTNATLHNADQIARLDVRVGDTVIVRRAGDVIPEVAGVVAEQRPAGTHAWQMPTQCPVCGSEIVREEGQAVWRCSGELTCPAQRKEAFRHFVSRRAMDVDGLGEKFIEVLVDSGVVQGVADLYLLNVDQLLQLRLISTADSPHAFLREAREHLAAGAYAQVEQTMVGIGVDLAGVQPAPQTWQADLLRAGLPAFDWNRKKIATKWAENLIEAIETSRDTTLERFLFALGIEHVGESTAKALSAWFGELDVIRHLPWPLFKRVPDIGGEVARSLGHFFDQAGNQQAIDDLLQRGVRIGDAHPPSPKLRGALSFAVLLEDLDIPKVTPVRAQQLAAATASFDALIASEADPLLQAGVPAPVIASLQQWLARPENAALATAAQRAMDALLAQLPQADAVQAGPLDGQTVVITGTLAALTRDAAKQRLESLGAKVAGSVSKKTAFLVAGEEAGSKLDKAQSLGVEIWDEARLLAFLSEHGQAV.

NAD(+) is bound by residues 35-39, 84-85, and E115; these read DVEYD and SL. The active-site N6-AMP-lysine intermediate is the K117. Residues R138, E175, K292, and K316 each coordinate NAD(+). Residues C410, C413, C428, and C434 each coordinate Zn(2+). The 84-residue stretch at 750–833 folds into the BRCT domain; it reads VQAGPLDGQT…AFLSEHGQAV (84 aa).

The protein belongs to the NAD-dependent DNA ligase family. LigA subfamily. Mg(2+) serves as cofactor. The cofactor is Mn(2+).

The enzyme catalyses NAD(+) + (deoxyribonucleotide)n-3'-hydroxyl + 5'-phospho-(deoxyribonucleotide)m = (deoxyribonucleotide)n+m + AMP + beta-nicotinamide D-nucleotide.. DNA ligase that catalyzes the formation of phosphodiester linkages between 5'-phosphoryl and 3'-hydroxyl groups in double-stranded DNA using NAD as a coenzyme and as the energy source for the reaction. It is essential for DNA replication and repair of damaged DNA. The protein is DNA ligase of Xanthomonas campestris pv. campestris (strain 8004).